The following is a 777-amino-acid chain: Myotubularin-related protein 10 (777 aa).

The segment at 196 to 217 is disordered; that stretch reads PSGDGGGGGGGGNGAGGGSSQK. A compositionally biased stretch (gly residues) spans 197-214; it reads SGDGGGGGGGGNGAGGGS. A Myotubularin phosphatase domain is found at 221–661; the sequence is FETYSDWDRE…THIKLWKLCY (441 aa). A phosphoserine mark is found at Ser607 and Ser751.

This sequence belongs to the protein-tyrosine phosphatase family. Non-receptor class myotubularin subfamily.

This is Myotubularin-related protein 10 (MTMR10) from Homo sapiens (Human).